The sequence spans 166 residues: Regulator of ribonuclease activity A (166 aa).

The protein belongs to the RraA family. Homotrimer. Binds to both RNA-binding sites in the C-terminal region of Rne and to RhlB.

It is found in the cytoplasm. Functionally, globally modulates RNA abundance by binding to RNase E (Rne) and regulating its endonucleolytic activity. Can modulate Rne action in a substrate-dependent manner by altering the composition of the degradosome. Modulates RNA-binding and helicase activities of the degradosome. The protein is Regulator of ribonuclease activity A of Pasteurella multocida (strain Pm70).